The following is a 542-amino-acid chain: Chaperonin GroEL (542 aa).

ATP is bound by residues 29-32 (TLGP), 86-90 (DGTTT), glycine 413, 476-478 (NAA), and aspartate 492.

This sequence belongs to the chaperonin (HSP60) family. As to quaternary structure, forms a cylinder of 14 subunits composed of two heptameric rings stacked back-to-back. Interacts with the co-chaperonin GroES.

The protein resides in the cytoplasm. It carries out the reaction ATP + H2O + a folded polypeptide = ADP + phosphate + an unfolded polypeptide.. In terms of biological role, together with its co-chaperonin GroES, plays an essential role in assisting protein folding. The GroEL-GroES system forms a nano-cage that allows encapsulation of the non-native substrate proteins and provides a physical environment optimized to promote and accelerate protein folding. The protein is Chaperonin GroEL of Bacillus cytotoxicus (strain DSM 22905 / CIP 110041 / 391-98 / NVH 391-98).